The chain runs to 307 residues: Haloalkane dehalogenase (307 aa).

The 125-residue stretch at 34 to 158 (PVLFLHGNPT…FQAFRTADVG (125 aa)) folds into the AB hydrolase-1 domain. Asp-106 serves as the catalytic Nucleophile. The active-site Proton donor is the Glu-130. The active-site Proton acceptor is the His-272.

It belongs to the haloalkane dehalogenase family. Type 2 subfamily. In terms of assembly, monomer.

It catalyses the reaction 1-haloalkane + H2O = a halide anion + a primary alcohol + H(+). It functions in the pathway xenobiotic degradation; 1,2-dibromoethane degradation. Functionally, catalyzes hydrolytic cleavage of carbon-halogen bonds in halogenated aliphatic compounds, leading to the formation of the corresponding primary alcohols, halide ions and protons. Has a broad substrate specificity, which includes mono- and di-chlorinated and brominated alkanes. The highest activity was found with 1,2-dibromoethane, whereas low activity was measured with the analog 1,2-dichloroethane. The chain is Haloalkane dehalogenase (dhaAF) from Mycobacterium sp. (strain GP1).